Here is a 169-residue protein sequence, read N- to C-terminus: uncharacterized protein (169 aa).

The 131-residue stretch at 32 to 162 (CNFRVVNSFV…EPAKSDLIKL (131 aa)) folds into the Nudix hydrolase domain. Positions 69–91 (GGHVESGETYEDALQRELEEELN) match the Nudix box motif. The Mg(2+) site is built by Glu85 and Glu89.

It belongs to the Nudix hydrolase family. Mg(2+) serves as cofactor.

This is an uncharacterized protein from Nostoc sp. (strain PCC 7120 / SAG 25.82 / UTEX 2576).